We begin with the raw amino-acid sequence, 299 residues long: ATP phosphoribosyltransferase (299 aa).

It belongs to the ATP phosphoribosyltransferase family. Long subfamily. As to quaternary structure, equilibrium between an active dimeric form, an inactive hexameric form and higher aggregates. Interconversion between the various forms is largely reversible and is influenced by the natural substrates and inhibitors of the enzyme. Requires Mg(2+) as cofactor.

Its subcellular location is the cytoplasm. The catalysed reaction is 1-(5-phospho-beta-D-ribosyl)-ATP + diphosphate = 5-phospho-alpha-D-ribose 1-diphosphate + ATP. The protein operates within amino-acid biosynthesis; L-histidine biosynthesis; L-histidine from 5-phospho-alpha-D-ribose 1-diphosphate: step 1/9. Feedback inhibited by histidine. Catalyzes the condensation of ATP and 5-phosphoribose 1-diphosphate to form N'-(5'-phosphoribosyl)-ATP (PR-ATP). Has a crucial role in the pathway because the rate of histidine biosynthesis seems to be controlled primarily by regulation of HisG enzymatic activity. In Escherichia coli O7:K1 (strain IAI39 / ExPEC), this protein is ATP phosphoribosyltransferase.